The sequence spans 1237 residues: Cilia- and flagella-associated protein 61 (1237 aa).

Residues 278–301 are disordered; it reads QDLSVRRSQDAELRSSSQGSQKIV. Over residues 281-290 the composition is skewed to basic and acidic residues; it reads SVRRSQDAEL.

In terms of assembly, component of axonemal radial spokes, the protein complexes that link the outer microtubule doublets with the central pair of microtubules. Interacts with CFAP91/MAATS1, ODAD2/ARMC4, RSPH3A, ROPN1, ROPN1L and RSPH9. Interacts with DYNLT1, DYNC1I2 and TUBB3. Interacts with WDR35, IFT22 and IFT81.

Its subcellular location is the cytoplasm. It is found in the cytoskeleton. The protein resides in the flagellum axoneme. Its function is as follows. Involved in sperm flagellum assembly. Plays an essential role in the formation of the radial spokes in flagellum axoneme. This is Cilia- and flagella-associated protein 61 from Homo sapiens (Human).